A 201-amino-acid chain; its full sequence is Dephospho-CoA kinase (201 aa).

Positions 4-201 constitute a DPCK domain; sequence TIGLTGGIAS…ILKQWDALEK (198 aa). 12 to 17 is a binding site for ATP; it reads ASGKST.

Belongs to the CoaE family.

The protein resides in the cytoplasm. It carries out the reaction 3'-dephospho-CoA + ATP = ADP + CoA + H(+). The protein operates within cofactor biosynthesis; coenzyme A biosynthesis; CoA from (R)-pantothenate: step 5/5. Catalyzes the phosphorylation of the 3'-hydroxyl group of dephosphocoenzyme A to form coenzyme A. The polypeptide is Dephospho-CoA kinase (Geobacillus kaustophilus (strain HTA426)).